Reading from the N-terminus, the 248-residue chain is tRNA uridine(34) hydroxylase (248 aa).

A Rhodanese domain is found at threonine 124 to asparagine 218. The Cysteine persulfide intermediate role is filled by cysteine 178.

The protein belongs to the TrhO family.

The catalysed reaction is uridine(34) in tRNA + AH2 + O2 = 5-hydroxyuridine(34) in tRNA + A + H2O. In terms of biological role, catalyzes oxygen-dependent 5-hydroxyuridine (ho5U) modification at position 34 in tRNAs. This is tRNA uridine(34) hydroxylase from Rickettsia bellii (strain OSU 85-389).